Here is a 118-residue protein sequence, read N- to C-terminus: NADH-ubiquinone oxidoreductase chain 3 (118 aa).

3 consecutive transmembrane segments (helical) span residues 1 to 21 (MLFF…VLVF), 59 to 79 (YTYF…SLLL), and 86 to 106 (VLYK…IGFL).

Belongs to the complex I subunit 3 family.

The protein resides in the mitochondrion membrane. It catalyses the reaction a ubiquinone + NADH + 5 H(+)(in) = a ubiquinol + NAD(+) + 4 H(+)(out). Functionally, core subunit of the mitochondrial membrane respiratory chain NADH dehydrogenase (Complex I) that is believed to belong to the minimal assembly required for catalysis. Complex I functions in the transfer of electrons from NADH to the respiratory chain. The immediate electron acceptor for the enzyme is believed to be ubiquinone. The sequence is that of NADH-ubiquinone oxidoreductase chain 3 (ND3) from Fasciola hepatica (Liver fluke).